Reading from the N-terminus, the 231-residue chain is NADH-ubiquinone oxidoreductase chain 4 (231 aa).

Helical transmembrane passes span 1-21 (PIAGSMVLAAILLKLGGYGII), 34-54 (LFLPFIVLALWGAILANLTCL), 63-85 (IAYSSISHMGLVVAAIIIQTPWG), 89-111 (AMALMIAHGFTSSALFCLANTTY), 128-148 (ILPMTTTWWLMTNLMNIAIPP), and 156-176 (LLIMSALFNWCPATIIMLGLS).

It belongs to the complex I subunit 4 family.

The protein localises to the mitochondrion membrane. The enzyme catalyses a ubiquinone + NADH + 5 H(+)(in) = a ubiquinol + NAD(+) + 4 H(+)(out). Functionally, core subunit of the mitochondrial membrane respiratory chain NADH dehydrogenase (Complex I) that is believed to belong to the minimal assembly required for catalysis. Complex I functions in the transfer of electrons from NADH to the respiratory chain. The immediate electron acceptor for the enzyme is believed to be ubiquinone. In Crotalus concolor (Midget faded rattlesnake), this protein is NADH-ubiquinone oxidoreductase chain 4 (MT-ND4).